The primary structure comprises 292 residues: 11-beta-hydroxysteroid dehydrogenase 1 (292 aa).

The Cytoplasmic segment spans residues 1–7 (MAFMKKY). A helical; Signal-anchor for type II membrane protein membrane pass occupies residues 8 to 24 (LLPILGIFLAYYYYSAN). The Lumenal segment spans residues 25–292 (EEFRPEMLRG…KYNMERFINN (268 aa)). NADP(+) is bound by residues 41 to 67 (GASK…TARS) and 92 to 93 (TM). The N-linked (GlcNAc...) asparagine glycan is linked to asparagine 95. 119–121 (NHI) lines the NADP(+) pocket. Serine 170 serves as a coordination point for substrate. Catalysis depends on tyrosine 183, which acts as the Proton acceptor. NADP(+) is bound at residue 183–187 (YSASK). Asparagine 207 carries an N-linked (GlcNAc...) asparagine glycan. NADP(+)-binding positions include 216–222 (GLIDTDT) and 218–222 (IDTDT).

It belongs to the short-chain dehydrogenases/reductases (SDR) family. In terms of assembly, homodimer. Liver, kidney, lung, hypothalamus, anterior pituitary and placenta.

The protein resides in the endoplasmic reticulum membrane. It catalyses the reaction an 11beta-hydroxysteroid + NADP(+) = an 11-oxosteroid + NADPH + H(+). The enzyme catalyses corticosterone + NADP(+) = 11-dehydrocorticosterone + NADPH + H(+). It carries out the reaction cortisone + NADPH + H(+) = cortisol + NADP(+). The catalysed reaction is a 7beta-hydroxysteroid + NADP(+) = a 7-oxosteroid + NADPH + H(+). It catalyses the reaction 7-oxocholesterol + NADPH + H(+) = 7beta-hydroxycholesterol + NADP(+). The enzyme catalyses chenodeoxycholate + NADP(+) = 7-oxolithocholate + NADPH + H(+). It carries out the reaction 7-oxolithocholate + NADPH + H(+) = ursodeoxycholate + NADP(+). The catalysed reaction is glycochenodeoxycholate + NADP(+) = 7-oxoglycolithocholate + NADPH + H(+). It catalyses the reaction taurochenodeoxycholate + NADP(+) = 7-oxotaurolithocholate + NADPH + H(+). The enzyme catalyses tauroursodeoxycholate + NADP(+) = 7-oxotaurolithocholate + NADPH + H(+). It carries out the reaction glycoursodeoxycholate + NADP(+) = 7-oxoglycolithocholate + NADPH + H(+). The catalysed reaction is 7-oxopregnenolone + NADPH + H(+) = 7beta-hydroxypregnenolone + NADP(+). It catalyses the reaction 3beta,7alpha-dihydroxyandrost-5-en-17-one + NADP(+) = 3beta-hydroxy-5-androstene-7,17-dione + NADPH + H(+). The enzyme catalyses 3beta-hydroxy-5-androstene-7,17-dione + NADPH + H(+) = 3beta,7beta-dihydroxyandrost-5-en-17-one + NADP(+). It carries out the reaction 3beta-hydroxy-5alpha-androstane-7,17-dione + NADPH + H(+) = 3beta,7beta-dihydroxy-5alpha-androstan-17-one + NADP(+). Functionally, controls the reversible conversion of biologically active glucocorticoids such as cortisone to cortisol, and 11-dehydrocorticosterone to corticosterone in the presence of NADP(H). Participates in the corticosteroid receptor-mediated anti-inflammatory response, as well as metabolic and homeostatic processes. Plays a role in the secretion of aqueous humor in the eye, maintaining a normotensive, intraocular environment. Bidirectional in vitro, predominantly functions as a reductase in vivo, thereby increasing the concentration of active glucocorticoids. It has broad substrate specificity, besides glucocorticoids, it accepts other steroid and sterol substrates. Interconverts 7-oxo- and 7-hydroxy-neurosteroids such as 7-oxopregnenolone and 7beta-hydroxypregnenolone, 7-oxodehydroepiandrosterone (3beta-hydroxy-5-androstene-7,17-dione) and 7beta-hydroxydehydroepiandrosterone (3beta,7beta-dihydroxyandrost-5-en-17-one), among others. Catalyzes the stereo-specific conversion of the major dietary oxysterol, 7-ketocholesterol (7-oxocholesterol), into the more polar 7-beta-hydroxycholesterol metabolite. 7-oxocholesterol is one of the most important oxysterols, it participates in several events such as induction of apoptosis, accumulation in atherosclerotic lesions, lipid peroxidation, and induction of foam cell formation. Mediates the 7-oxo reduction of 7-oxolithocholate mainly to chenodeoxycholate, and to a lesser extent to ursodeoxycholate, both in its free form and when conjugated to glycine or taurine, providing a link between glucocorticoid activation and bile acid metabolism. Catalyzes the synthesis of 7-beta-25-dihydroxycholesterol from 7-oxo-25-hydroxycholesterol in vitro, which acts as a ligand for the G-protein-coupled receptor (GPCR) Epstein-Barr virus-induced gene 2 (EBI2) and may thereby regulate immune cell migration. The sequence is that of 11-beta-hydroxysteroid dehydrogenase 1 (HSD11B1) from Ovis aries (Sheep).